A 615-amino-acid polypeptide reads, in one-letter code: ATP-dependent zinc metalloprotease FtsH (615 aa).

Residues 1-8 lie on the Cytoplasmic side of the membrane; sequence MAMNKDKP. The chain crosses the membrane as a helical span at residues 9-29; it reads WTLYLLAVGLAVLAAVQFGLF. At 30-104 the chain is on the periplasmic side; that stretch reads SQPAVQAIPY…FSGVVEDNTV (75 aa). The chain crosses the membrane as a helical span at residues 105–125; that stretch reads ATVMGALMPLLMLLALWYFLF. Residues 126–615 lie on the Cytoplasmic side of the membrane; it reads HGLGQKQGLG…ATYVLVDATK (490 aa). 198-205 is an ATP binding site; the sequence is GPPGTGKT. H420 is a Zn(2+) binding site. E421 is a catalytic residue. Residues H424 and D497 each contribute to the Zn(2+) site.

The protein in the central section; belongs to the AAA ATPase family. In the C-terminal section; belongs to the peptidase M41 family. As to quaternary structure, homohexamer. Zn(2+) is required as a cofactor.

The protein localises to the cell inner membrane. Acts as a processive, ATP-dependent zinc metallopeptidase for both cytoplasmic and membrane proteins. Plays a role in the quality control of integral membrane proteins. The protein is ATP-dependent zinc metalloprotease FtsH of Pseudomonas putida (strain ATCC 700007 / DSM 6899 / JCM 31910 / BCRC 17059 / LMG 24140 / F1).